Here is a 132-residue protein sequence, read N- to C-terminus: ATP synthase epsilon chain, chloroplastic (132 aa).

Thr-2 bears the N-acetylthreonine mark.

This sequence belongs to the ATPase epsilon chain family. F-type ATPases have 2 components, CF(1) - the catalytic core - and CF(0) - the membrane proton channel. CF(1) has five subunits: alpha(3), beta(3), gamma(1), delta(1), epsilon(1). CF(0) has three main subunits: a, b and c.

It is found in the plastid. The protein resides in the chloroplast thylakoid membrane. Produces ATP from ADP in the presence of a proton gradient across the membrane. This Arabidopsis thaliana (Mouse-ear cress) protein is ATP synthase epsilon chain, chloroplastic.